The sequence spans 386 residues: Succinate--CoA ligase [ADP-forming] subunit beta (386 aa).

Positions 9–244 constitute an ATP-grasp domain; it reads KDLLTAYQLP…PSQENIRDVL (236 aa). ATP-binding positions include K46, 53–55, V102, and E107; that span reads GRG. The Mg(2+) site is built by N199 and D213. Substrate-binding positions include N264 and 321–323; that span reads GIM.

The protein belongs to the succinate/malate CoA ligase beta subunit family. As to quaternary structure, heterotetramer of two alpha and two beta subunits. Requires Mg(2+) as cofactor.

It catalyses the reaction succinate + ATP + CoA = succinyl-CoA + ADP + phosphate. The catalysed reaction is GTP + succinate + CoA = succinyl-CoA + GDP + phosphate. It participates in carbohydrate metabolism; tricarboxylic acid cycle; succinate from succinyl-CoA (ligase route): step 1/1. In terms of biological role, succinyl-CoA synthetase functions in the citric acid cycle (TCA), coupling the hydrolysis of succinyl-CoA to the synthesis of either ATP or GTP and thus represents the only step of substrate-level phosphorylation in the TCA. The beta subunit provides nucleotide specificity of the enzyme and binds the substrate succinate, while the binding sites for coenzyme A and phosphate are found in the alpha subunit. This is Succinate--CoA ligase [ADP-forming] subunit beta from Chlamydia trachomatis serovar L2 (strain ATCC VR-902B / DSM 19102 / 434/Bu).